The chain runs to 281 residues: Ribosomal protein L11 methyltransferase (281 aa).

4 residues coordinate S-adenosyl-L-methionine: T131, G152, D174, and N217.

Belongs to the methyltransferase superfamily. PrmA family.

The protein resides in the cytoplasm. It catalyses the reaction L-lysyl-[protein] + 3 S-adenosyl-L-methionine = N(6),N(6),N(6)-trimethyl-L-lysyl-[protein] + 3 S-adenosyl-L-homocysteine + 3 H(+). Its function is as follows. Methylates ribosomal protein L11. The protein is Ribosomal protein L11 methyltransferase of Phocaeicola vulgatus (strain ATCC 8482 / DSM 1447 / JCM 5826 / CCUG 4940 / NBRC 14291 / NCTC 11154) (Bacteroides vulgatus).